The chain runs to 214 residues: Dephospho-CoA kinase (214 aa).

In terms of domain architecture, DPCK spans 3–202; the sequence is KIGLTGGIGS…DRWLALAGAA (200 aa). Residue 11–16 coordinates ATP; sequence GSGKSR.

It belongs to the CoaE family.

The protein localises to the cytoplasm. It carries out the reaction 3'-dephospho-CoA + ATP = ADP + CoA + H(+). It functions in the pathway cofactor biosynthesis; coenzyme A biosynthesis; CoA from (R)-pantothenate: step 5/5. Its function is as follows. Catalyzes the phosphorylation of the 3'-hydroxyl group of dephosphocoenzyme A to form coenzyme A. This chain is Dephospho-CoA kinase, found in Bordetella pertussis (strain Tohama I / ATCC BAA-589 / NCTC 13251).